A 460-amino-acid chain; its full sequence is Probable carboxypeptidase TRV_02791 (460 aa).

A signal peptide spans 1–22 (MQKTYLWALVSLLASSLVDARS). N98 carries an N-linked (GlcNAc...) asparagine glycan. Zn(2+) is bound at residue D175. E207 (proton acceptor) is an active-site residue. Position 208 (E208) interacts with Zn(2+). N-linked (GlcNAc...) asparagine glycosylation is present at N395.

This sequence belongs to the peptidase M20A family. It depends on Zn(2+) as a cofactor.

It is found in the secreted. This is Probable carboxypeptidase TRV_02791 from Trichophyton verrucosum (strain HKI 0517).